The chain runs to 156 residues: 6,7-dimethyl-8-ribityllumazine synthase (156 aa).

5-amino-6-(D-ribitylamino)uracil contacts are provided by residues Phe-22, 57–59 (AYE), and 81–83 (TVI). Residue 86 to 87 (GT) coordinates (2S)-2-hydroxy-3-oxobutyl phosphate. His-89 acts as the Proton donor in catalysis. Phe-114 lines the 5-amino-6-(D-ribitylamino)uracil pocket. Arg-128 lines the (2S)-2-hydroxy-3-oxobutyl phosphate pocket.

It belongs to the DMRL synthase family. In terms of assembly, forms an icosahedral capsid composed of 60 subunits, arranged as a dodecamer of pentamers.

It catalyses the reaction (2S)-2-hydroxy-3-oxobutyl phosphate + 5-amino-6-(D-ribitylamino)uracil = 6,7-dimethyl-8-(1-D-ribityl)lumazine + phosphate + 2 H2O + H(+). The protein operates within cofactor biosynthesis; riboflavin biosynthesis; riboflavin from 2-hydroxy-3-oxobutyl phosphate and 5-amino-6-(D-ribitylamino)uracil: step 1/2. Functionally, catalyzes the formation of 6,7-dimethyl-8-ribityllumazine by condensation of 5-amino-6-(D-ribitylamino)uracil with 3,4-dihydroxy-2-butanone 4-phosphate. This is the penultimate step in the biosynthesis of riboflavin. In Escherichia coli O45:K1 (strain S88 / ExPEC), this protein is 6,7-dimethyl-8-ribityllumazine synthase.